The primary structure comprises 200 residues: MVSLRLPLILLSLLAISFSCSAAPPPVYDTEGHELSADGSYYVLPASPGHGGGLTMAPRVLPCPLLVAQETDERRKGFPVRFTPWGGAAAPEDRTIRVSTDVRIRFNAATICVQSTEWHVGDEPLTGARRVVTGPLIGPSPSGRENAFRVEKYGGGYKLVSCRDSCQDLGVSRDGARAWLGASQPPHVVVFKKARPSPPE.

The N-terminal stretch at 1–22 (MVSLRLPLILLSLLAISFSCSA) is a signal peptide. Cystine bridges form between Cys63–Cys112 and Cys162–Cys166.

The protein belongs to the protease inhibitor I3 (leguminous Kunitz-type inhibitor) family.

In terms of biological role, this protein inhibits independently subtilisin and T.castaneum alpha-amylase but not barley alpha-amylase. The chain is Alpha-amylase/subtilisin inhibitor (RASI) from Oryza sativa subsp. japonica (Rice).